A 400-amino-acid polypeptide reads, in one-letter code: Large envelope protein (400 aa).

At methionine 1 the chain carries N-acetylmethionine. 2 disordered regions span residues 1-24 and 89-116; these read MGGWSSKPRKGMGTNLSVPNPLGF and PAMPPPASTNRQSGRQPTPISPPLRDSH. Glycine 2 is lipidated: N-myristoyl glycine; by host. The interval 2–119 is pre-S1; that stretch reads GGWSSKPRKG…PPLRDSHPQA (118 aa). The interval 2–174 is pre-S; it reads GGWSSKPRKG…SSRIGDPAPN (173 aa). Residues 2–181 are Virion surface; in external conformation-facing; it reads GGWSSKPRKG…APNMENITSG (180 aa). Residues 2–253 lie on the Intravirion; in internal conformation side of the membrane; the sequence is GGWSSKPRKG…PGYRWMCLRR (252 aa). Tryptophan 4 is a glycosylation site (N-linked (GlcNAc...) asparagine). Polar residues predominate over residues 96 to 106; it reads STNRQSGRQPT. The pre-S2 stretch occupies residues 120-174; the sequence is MQWNSTAFHQALQDPRVRGLYFPAGGSSSGTLNPVPTIASHISSISSRIGDPAPN. The chain crosses the membrane as a helical span at residues 182 to 202; it reads FLGPLLVLQAGFFLLTRILTI. Residues 203–253 lie on the Intravirion; in external conformation side of the membrane; the sequence is PQSLDSWWTSLNFLGGAPVCLGQNSQSPTSNHSPTSCPPICPGYRWMCLRR. Residues 254–274 traverse the membrane as a helical segment; that stretch reads FIIFLFILLLCLIFLLVLLDY. The Virion surface segment spans residues 275–348; sequence QGMLPVCPLI…WASVRFSWLS (74 aa). N-linked (GlcNAc...) asparagine; by host glycosylation is present at asparagine 320. The helical transmembrane segment at 349–369 threads the bilayer; sequence LLVPFVQWFVGLSPTVWLSAI. The Intravirion portion of the chain corresponds to 370–375; sequence WMMWYW. A helical membrane pass occupies residues 376–398; that stretch reads GPSLYNILSPFIPLLPIFFCLWV. At 399-400 the chain is on the virion surface side; that stretch reads YI.

The protein belongs to the orthohepadnavirus major surface antigen family. In its internal form (Li-HBsAg), interacts with the capsid protein and with the isoform S. Interacts with host chaperone CANX. As to quaternary structure, associates with host chaperone CANX through its pre-S2 N glycan; this association may be essential for isoform M proper secretion. In terms of assembly, interacts with isoform L. Interacts with the antigens of satellite virus HDV (HDVAgs); this interaction is required for encapsidation of HDV genomic RNA. In terms of processing, isoform M is N-terminally acetylated by host at a ratio of 90%, and N-glycosylated by host at the pre-S2 region. Post-translationally, myristoylated.

The protein localises to the virion membrane. Its function is as follows. The large envelope protein exists in two topological conformations, one which is termed 'external' or Le-HBsAg and the other 'internal' or Li-HBsAg. In its external conformation the protein attaches the virus to cell receptors and thereby initiating infection. This interaction determines the species specificity and liver tropism. This attachment induces virion internalization predominantly through caveolin-mediated endocytosis. The large envelope protein also assures fusion between virion membrane and endosomal membrane. In its internal conformation the protein plays a role in virion morphogenesis and mediates the contact with the nucleocapsid like a matrix protein. Functionally, the middle envelope protein plays an important role in the budding of the virion. It is involved in the induction of budding in a nucleocapsid independent way. In this process the majority of envelope proteins bud to form subviral lipoprotein particles of 22 nm of diameter that do not contain a nucleocapsid. The polypeptide is Large envelope protein (Hepatitis B virus genotype A1 subtype adw (isolate Philippines/pFDW294/1988) (HBV-A)).